A 150-amino-acid chain; its full sequence is Transcription antitermination protein NusB (150 aa).

This sequence belongs to the NusB family.

Functionally, involved in transcription antitermination. Required for transcription of ribosomal RNA (rRNA) genes. Binds specifically to the boxA antiterminator sequence of the ribosomal RNA (rrn) operons. This Streptococcus pyogenes serotype M3 (strain ATCC BAA-595 / MGAS315) protein is Transcription antitermination protein NusB.